The following is a 61-amino-acid chain: Small ribosomal subunit protein uS14 (61 aa).

The Zn(2+) site is built by Cys-24, Cys-27, Cys-40, and Cys-43.

Belongs to the universal ribosomal protein uS14 family. Zinc-binding uS14 subfamily. Part of the 30S ribosomal subunit. Contacts proteins S3 and S10. The cofactor is Zn(2+).

Functionally, binds 16S rRNA, required for the assembly of 30S particles and may also be responsible for determining the conformation of the 16S rRNA at the A site. The sequence is that of Small ribosomal subunit protein uS14 from Streptococcus thermophilus (strain CNRZ 1066).